We begin with the raw amino-acid sequence, 92 residues long: Small ribosomal subunit protein uS19c (92 aa).

Belongs to the universal ribosomal protein uS19 family.

The protein localises to the plastid. It localises to the chloroplast. In terms of biological role, protein S19 forms a complex with S13 that binds strongly to the 16S ribosomal RNA. This is Small ribosomal subunit protein uS19c from Ceratophyllum demersum (Rigid hornwort).